The sequence spans 953 residues: Protein translocase subunit SecA (953 aa).

ATP contacts are provided by residues Gln-84, 102 to 106 (GEGKT), and Asp-491. Residues 832–953 (EPEPAPEQPS…RAEAKKNKRR (122 aa)) form a disordered region. The segment covering 841–865 (SVPVSVSRSAEPTPDLQAAAEAAAA) has biased composition (low complexity). Residues 898–907 (KGLDAPEKQR) show a composition bias toward basic and acidic residues. The span at 908–934 (LNYSGPTEQGGVQTTSESAGEQGNGTS) shows a compositional bias: polar residues. Residues 940-953 (RAAARAEAKKNKRR) are compositionally biased toward basic and acidic residues.

It belongs to the SecA family. In terms of assembly, monomer and homodimer. Part of the essential Sec protein translocation apparatus which comprises SecA, SecYEG and auxiliary proteins SecDF. Other proteins may also be involved.

It is found in the cell membrane. Its subcellular location is the cytoplasm. It carries out the reaction ATP + H2O + cellular proteinSide 1 = ADP + phosphate + cellular proteinSide 2.. Functionally, part of the Sec protein translocase complex. Interacts with the SecYEG preprotein conducting channel. Has a central role in coupling the hydrolysis of ATP to the transfer of proteins into and across the cell membrane, serving as an ATP-driven molecular motor driving the stepwise translocation of polypeptide chains across the membrane. This is Protein translocase subunit SecA from Saccharopolyspora erythraea (strain ATCC 11635 / DSM 40517 / JCM 4748 / NBRC 13426 / NCIMB 8594 / NRRL 2338).